A 320-amino-acid polypeptide reads, in one-letter code: MLQTTPPDLLPGAADVREAVASWLTLLARERRFSPNTVEAYARDLRQFLAHRARAGTQPDIPSLVALKPRDLRAFMAARRAEGIGGRSLMRALASLRSFARHLEREGHGTVSALSAVRSPKVERRLPRPLPVAAAVALASPDIRAGEDRPDWVLARDAAVLALLYGAGLRIGEALGLRRKDAPVGGLDTLTIVGKGQKTRMVPVIAPVQAALAEYLAACPYALAPDGPLFVGQKGGPLSPRVVQLAVASLRGALGLPDSATPHALRHSFATHLLARQGDLRAIQDLLGHASLATTQIYTKVDSARLMSAFEAAHPRAGRM.

In terms of domain architecture, Core-binding (CB) spans 14 to 104 (ADVREAVASW…SLRSFARHLE (91 aa)). The region spanning 125–311 (RLPRPLPVAA…DSARLMSAFE (187 aa)) is the Tyr recombinase domain. Active-site residues include R170, K195, H263, R266, and H289. The O-(3'-phospho-DNA)-tyrosine intermediate role is filled by Y298.

The protein belongs to the 'phage' integrase family. XerC subfamily. As to quaternary structure, forms a cyclic heterotetrameric complex composed of two molecules of XerC and two molecules of XerD.

It localises to the cytoplasm. In terms of biological role, site-specific tyrosine recombinase, which acts by catalyzing the cutting and rejoining of the recombining DNA molecules. The XerC-XerD complex is essential to convert dimers of the bacterial chromosome into monomers to permit their segregation at cell division. It also contributes to the segregational stability of plasmids. In Methylobacterium sp. (strain 4-46), this protein is Tyrosine recombinase XerC.